A 209-amino-acid polypeptide reads, in one-letter code: PRA1 family protein A2 (209 aa).

A run of 4 helical transmembrane segments spans residues 51-72 (LYYYRTNYFILVIFVLGLALVT), 76-98 (ALVGAALTALSIAFLNDSFAASF), 142-162 (RWVFVITFLTASLVMWFSSCG), and 163-183 (LLWVLYALLTSLAVIIVHASI).

Belongs to the PRA1 family.

The protein resides in the endosome membrane. Its function is as follows. May be involved in both secretory and endocytic intracellular trafficking in the endosomal/prevacuolar compartments. This is PRA1 family protein A2 (PRA1A2) from Arabidopsis thaliana (Mouse-ear cress).